A 204-amino-acid chain; its full sequence is N-(5'-phosphoribosyl)anthranilate isomerase (204 aa).

It belongs to the TrpF family.

It carries out the reaction N-(5-phospho-beta-D-ribosyl)anthranilate = 1-(2-carboxyphenylamino)-1-deoxy-D-ribulose 5-phosphate. The protein operates within amino-acid biosynthesis; L-tryptophan biosynthesis; L-tryptophan from chorismate: step 3/5. This Bacillus thuringiensis (strain Al Hakam) protein is N-(5'-phosphoribosyl)anthranilate isomerase.